A 64-amino-acid polypeptide reads, in one-letter code: Large ribosomal subunit protein bL33 (64 aa).

It belongs to the bacterial ribosomal protein bL33 family.

The chain is Large ribosomal subunit protein bL33 from Synechococcus sp. (strain JA-2-3B'a(2-13)) (Cyanobacteria bacterium Yellowstone B-Prime).